The primary structure comprises 499 residues: Sensor histidine kinase VxrA (499 aa).

Topologically, residues 1-12 (MRYSFCMLEKTN) are cytoplasmic. A helical transmembrane segment spans residues 13–31 (IPLIRALNLTLVSLCFAML). Residues 32 to 257 (PNPVHADSLP…ICWDVEDHSD (226 aa)) are Periplasmic-facing. Disulfide bonds link Cys-101–Cys-122 and Cys-241–Cys-249. Residues 258 to 280 (LLRTSMIILVIANIFLVLGWSGY) traverse the membrane as a helical segment. At 281–499 (RWNSKRQEMR…IPCETDTASR (219 aa)) the chain is on the cytoplasmic side. One can recognise a Histidine kinase domain in the interval 298–494 (ILTHELRTPI…TFILEIPCET (197 aa)). His-301 bears the Phosphohistidine; by autocatalysis mark.

In terms of assembly, homodimer. In terms of processing, autophosphorylated. Contains two disulfide bonds that may play a role in the stability of the protein. However, the disulfide bonds are not absolutely essential, as some activity and growth are detected in the absence of each disulfide bond.

The protein resides in the cell inner membrane. It carries out the reaction ATP + protein L-histidine = ADP + protein N-phospho-L-histidine.. Functionally, member of the two-component regulatory system VxrB/VxrA involved in the regulation of diverses processes, including virulence, the type VI secretion system (T6SS) and biofilm formation. Functions as a sensor protein kinase which is autophosphorylated at a histidine residue and transfers its phosphate group to the conserved aspartic acid residue in the regulatory domain of VxrB. Is critical for colonization in the infant mouse model. Contributes to the resistance to beta-lactam treatment. In Vibrio cholerae serotype O1 (strain ATCC 39315 / El Tor Inaba N16961), this protein is Sensor histidine kinase VxrA.